We begin with the raw amino-acid sequence, 101 residues long: Small ribosomal subunit protein uS14 (101 aa).

It belongs to the universal ribosomal protein uS14 family. In terms of assembly, part of the 30S ribosomal subunit. Contacts proteins S3 and S10.

Binds 16S rRNA, required for the assembly of 30S particles and may also be responsible for determining the conformation of the 16S rRNA at the A site. The protein is Small ribosomal subunit protein uS14 of Methylorubrum extorquens (strain PA1) (Methylobacterium extorquens).